Reading from the N-terminus, the 526-residue chain is Lysine--tRNA ligase (526 aa).

Residues Glu-431 and Glu-438 each coordinate Mg(2+).

Belongs to the class-II aminoacyl-tRNA synthetase family. In terms of assembly, homodimer. Mg(2+) is required as a cofactor.

The protein resides in the cytoplasm. It catalyses the reaction tRNA(Lys) + L-lysine + ATP = L-lysyl-tRNA(Lys) + AMP + diphosphate. This Chlamydia trachomatis serovar D (strain ATCC VR-885 / DSM 19411 / UW-3/Cx) protein is Lysine--tRNA ligase (lysS).